The sequence spans 283 residues: Spore coat polysaccharide biosynthesis protein SpsK (283 aa).

Belongs to the dTDP-4-dehydrorhamnose reductase family.

It participates in spore coat biogenesis; spore coat polysaccharide biosynthesis. This is Spore coat polysaccharide biosynthesis protein SpsK (spsK) from Bacillus subtilis (strain 168).